The primary structure comprises 193 residues: MSPLVGVLALQGDVREHVAALKDSGAEALGVRRPEELGKVDGLVIPGGESTTMSNLLRVFELLDPLTERLRAGLPVYGSCAGMILLASEILDTRPDAVALGAIDMTVRRNAFGRQVDSFEGDLDFTGVDGAMHAVFIRAPWVERVGDDVEVLASAQGHPVAVRQGSALATAFHPEVTGDRRVHQLFVDMVRAG.

48–50 (GES) contacts L-glutamine. Cysteine 80 (nucleophile) is an active-site residue. L-glutamine is bound by residues arginine 109 and 137-138 (IR). Active-site charge relay system residues include histidine 173 and glutamate 175.

Belongs to the glutaminase PdxT/SNO family. In terms of assembly, in the presence of PdxS, forms a dodecamer of heterodimers. Only shows activity in the heterodimer.

It catalyses the reaction aldehydo-D-ribose 5-phosphate + D-glyceraldehyde 3-phosphate + L-glutamine = pyridoxal 5'-phosphate + L-glutamate + phosphate + 3 H2O + H(+). The enzyme catalyses L-glutamine + H2O = L-glutamate + NH4(+). It participates in cofactor biosynthesis; pyridoxal 5'-phosphate biosynthesis. Its function is as follows. Catalyzes the hydrolysis of glutamine to glutamate and ammonia as part of the biosynthesis of pyridoxal 5'-phosphate. The resulting ammonia molecule is channeled to the active site of PdxS. The protein is Pyridoxal 5'-phosphate synthase subunit PdxT of Mycobacteroides abscessus (strain ATCC 19977 / DSM 44196 / CCUG 20993 / CIP 104536 / JCM 13569 / NCTC 13031 / TMC 1543 / L948) (Mycobacterium abscessus).